Reading from the N-terminus, the 65-residue chain is Photosystem II reaction center protein J (65 aa).

The helical transmembrane segment at 35-55 (LWLVATAGGIAVIFVLGIFFY) threads the bilayer.

The protein belongs to the PsbJ family. As to quaternary structure, PSII is composed of 1 copy each of membrane proteins PsbA, PsbB, PsbC, PsbD, PsbE, PsbF, PsbH, PsbI, PsbJ, PsbK, PsbL, PsbM, PsbT, PsbX, PsbY, Psb30/Ycf12, peripheral proteins PsbO, CyanoQ (PsbQ), PsbU, PsbV and a large number of cofactors. It forms dimeric complexes.

The protein localises to the cellular thylakoid membrane. Functionally, one of the components of the core complex of photosystem II (PSII). PSII is a light-driven water:plastoquinone oxidoreductase that uses light energy to abstract electrons from H(2)O, generating O(2) and a proton gradient subsequently used for ATP formation. It consists of a core antenna complex that captures photons, and an electron transfer chain that converts photonic excitation into a charge separation. This is Photosystem II reaction center protein J from Prochlorococcus marinus (strain MIT 9312).